The following is a 598-amino-acid chain: NADH-quinone oxidoreductase subunit C/D (598 aa).

Residues 1–188 (MTDSTTHDAL…DPFVLTKQKE (188 aa)) form an NADH dehydrogenase I subunit C region. An NADH dehydrogenase I subunit D region spans residues 212–598 (DFMFLNLGPN…IDFVMSDVDR (387 aa)).

It in the N-terminal section; belongs to the complex I 30 kDa subunit family. This sequence in the C-terminal section; belongs to the complex I 49 kDa subunit family. NDH-1 is composed of 13 different subunits. Subunits NuoB, CD, E, F, and G constitute the peripheral sector of the complex.

The protein resides in the cell inner membrane. The catalysed reaction is a quinone + NADH + 5 H(+)(in) = a quinol + NAD(+) + 4 H(+)(out). Functionally, NDH-1 shuttles electrons from NADH, via FMN and iron-sulfur (Fe-S) centers, to quinones in the respiratory chain. The immediate electron acceptor for the enzyme in this species is believed to be ubiquinone. Couples the redox reaction to proton translocation (for every two electrons transferred, four hydrogen ions are translocated across the cytoplasmic membrane), and thus conserves the redox energy in a proton gradient. The polypeptide is NADH-quinone oxidoreductase subunit C/D (Serratia proteamaculans (strain 568)).